Consider the following 1572-residue polypeptide: E3 ubiquitin-protein ligase HECW2 (1572 aa).

At S48 the chain carries Phosphoserine. Positions 167–301 constitute a C2 domain; it reads GAEGMEGGAS…QAIGDQMLSY (135 aa). 2 disordered regions span residues 341-452 and 489-796; these read VNSV…SSFP and IMFS…PSVR. The segment covering 400–410 has biased composition (low complexity); that stretch reads TSTSSRTSPPR. A compositionally biased stretch (basic and acidic residues) spans 518–532; that stretch reads ASTHEAASFEDKPEN. Polar residues-rich tracts occupy residues 572–588, 597–614, 643–664, and 688–703; these read EVDQ…SDAS, ETES…SSET, SSCN…SSLE, and PTSS…SVCT. The tract at residues 737-1068 is interaction with TP73; that stretch reads WQRRGSLEGA…PRPSSTFNTV (332 aa). The segment covering 744 to 776 has biased composition (low complexity); it reads EGAAAAAESPPQEEGSAGEAQGTCEGATAQEEG. Residues 807–840 enclose the WW 1 domain; the sequence is EALPPNWEARIDSHGRIFYVDHVNRTTTWQRPTA. Residues 847-874 adopt a coiled-coil conformation; sequence LQRSNSIQQMEQLNRRYQSIRRTMTNER. 2 positions are modified to phosphoserine: S852 and S909. The WW 2 domain maps to 985–1018; the sequence is LELPRGWEMKHDHQGKAFFVDHNSRTTTFIDPRL. Disordered stretches follow at residues 1024-1069 and 1161-1187; these read RPTS…NTVS and CQSP…RAPA. The segment covering 1031–1040 has biased composition (basic residues); sequence HRQHLTRQRS. Residues 1161 to 1181 show a composition bias toward polar residues; sequence CQSPRGSPVSSPQNSPGTQRA. S1175 bears the Phosphoserine mark. The region spanning 1237–1572 is the HECT domain; that stretch reads SRKDLQRNKL…VEETSTFGLE (336 aa). C1540 (glycyl thioester intermediate) is an active-site residue.

As to quaternary structure, interacts with TP73. Interacts with FZR1. In terms of processing, ubiquitinated and degraded during mitotic exit by APC/C-Cdh1. In terms of tissue distribution, predominantly expressed in adult brain, lung and heart.

The protein localises to the cytoplasm. Its subcellular location is the cytoskeleton. It is found in the spindle. The catalysed reaction is S-ubiquitinyl-[E2 ubiquitin-conjugating enzyme]-L-cysteine + [acceptor protein]-L-lysine = [E2 ubiquitin-conjugating enzyme]-L-cysteine + N(6)-ubiquitinyl-[acceptor protein]-L-lysine.. It participates in protein modification; protein ubiquitination. E3 ubiquitin-protein ligase that mediates ubiquitination of TP73. Acts to stabilize TP73 and enhance activation of transcription by TP73. Involved in the regulation of mitotic metaphase/anaphase transition. The chain is E3 ubiquitin-protein ligase HECW2 (HECW2) from Homo sapiens (Human).